The sequence spans 331 residues: GTP 3',8-cyclase 2 (331 aa).

Positions 9–234 constitute a Radical SAM core domain; sequence PFGRRITYLR…PSLARSGGPS (226 aa). Residue R18 coordinates GTP. Residues C25 and C29 each coordinate [4Fe-4S] cluster. Y31 provides a ligand contact to S-adenosyl-L-methionine. C32 is a binding site for [4Fe-4S] cluster. R67 provides a ligand contact to GTP. An S-adenosyl-L-methionine-binding site is contributed by G71. T98 provides a ligand contact to GTP. Position 122 (S122) interacts with S-adenosyl-L-methionine. K159 is a binding site for GTP. M193 lines the S-adenosyl-L-methionine pocket. [4Fe-4S] cluster contacts are provided by C257 and C260. 262 to 264 serves as a coordination point for GTP; that stretch reads RVR. C274 lines the [4Fe-4S] cluster pocket.

It belongs to the radical SAM superfamily. MoaA family. As to quaternary structure, monomer and homodimer. Requires [4Fe-4S] cluster as cofactor.

The catalysed reaction is GTP + AH2 + S-adenosyl-L-methionine = (8S)-3',8-cyclo-7,8-dihydroguanosine 5'-triphosphate + 5'-deoxyadenosine + L-methionine + A + H(+). It participates in cofactor biosynthesis; molybdopterin biosynthesis. In terms of biological role, catalyzes the cyclization of GTP to (8S)-3',8-cyclo-7,8-dihydroguanosine 5'-triphosphate. In Pseudomonas aeruginosa (strain ATCC 15692 / DSM 22644 / CIP 104116 / JCM 14847 / LMG 12228 / 1C / PRS 101 / PAO1), this protein is GTP 3',8-cyclase 2 (moaA2).